The primary structure comprises 345 residues: MSKQKNDTFLRACRGEKTDYVPVWYMRQAGRSQPEYRALKEKYSLFEITHQPELCAYVTRLPVEQYHVDAAILYKDIMSPLPAIGVDVEIKAGVGPVIANPIRSLADVEKLGEIHPEEDVPYVLETIKLLTTEQLNVPLIGFAGAPFTLASYMIEGGPSKNYNKTKAFMYAEPKAWFALMDKLADMTIRYVKAQIRAGASAIQIFDSWVGAVNVDDYRTFIKPTMARIFAALREENVPLIMFGVGASHLAKEWNDLPLDVIGLDWRLSIREARERGITKALQGNLDPAVLLAPWEVIEKRVKQILDEGMEQPGYIFNLGHGIFPEIQPETLKRLTAFIHDYTSRK.

Substrate contacts are provided by residues arginine 27–arginine 31, phenylalanine 46, aspartate 76, tyrosine 152, serine 207, and histidine 320.

This sequence belongs to the uroporphyrinogen decarboxylase family. In terms of assembly, homodimer.

The protein resides in the cytoplasm. It carries out the reaction uroporphyrinogen III + 4 H(+) = coproporphyrinogen III + 4 CO2. Its pathway is porphyrin-containing compound metabolism; protoporphyrin-IX biosynthesis; coproporphyrinogen-III from 5-aminolevulinate: step 4/4. Catalyzes the decarboxylation of four acetate groups of uroporphyrinogen-III to yield coproporphyrinogen-III. The polypeptide is Uroporphyrinogen decarboxylase (Geobacillus sp. (strain WCH70)).